Reading from the N-terminus, the 757-residue chain is 5-methyltetrahydropteroyltriglutamate--homocysteine methyltransferase (757 aa).

Residues 16–19 (RELK) and Lys-112 contribute to the 5-methyltetrahydropteroyltri-L-glutamate site. Residues 432–434 (IGS) and Glu-485 contribute to the L-homocysteine site. L-methionine-binding positions include 432-434 (IGS) and Glu-485. 5-methyltetrahydropteroyltri-L-glutamate contacts are provided by residues 516-517 (RC) and Trp-562. Asp-600 lines the L-homocysteine pocket. Position 600 (Asp-600) interacts with L-methionine. Residue Glu-606 participates in 5-methyltetrahydropteroyltri-L-glutamate binding. 3 residues coordinate Zn(2+): His-642, Cys-644, and Glu-666. Residue His-695 is the Proton donor of the active site. Position 727 (Cys-727) interacts with Zn(2+).

This sequence belongs to the vitamin-B12 independent methionine synthase family. Zn(2+) serves as cofactor.

It carries out the reaction 5-methyltetrahydropteroyltri-L-glutamate + L-homocysteine = tetrahydropteroyltri-L-glutamate + L-methionine. The protein operates within amino-acid biosynthesis; L-methionine biosynthesis via de novo pathway; L-methionine from L-homocysteine (MetE route): step 1/1. Catalyzes the transfer of a methyl group from 5-methyltetrahydrofolate to homocysteine resulting in methionine formation. In Actinobacillus pleuropneumoniae serotype 7 (strain AP76), this protein is 5-methyltetrahydropteroyltriglutamate--homocysteine methyltransferase.